The following is a 191-amino-acid chain: Glutathione-dependent formaldehyde-activating enzyme (191 aa).

Residues 22–169 enclose the CENP-V/GFA domain; sequence FQGGTLECHC…LTELGLPPYD (148 aa). Zn(2+)-binding residues include cysteine 29, cysteine 31, cysteine 50, cysteine 52, cysteine 55, cysteine 97, and cysteine 100.

The protein belongs to the Gfa family. The cofactor is Zn(2+).

It catalyses the reaction S-(hydroxymethyl)glutathione = glutathione + formaldehyde. It functions in the pathway one-carbon metabolism; formaldehyde degradation; formate from formaldehyde (glutathione route): step 1/3. In terms of biological role, catalyzes the condensation of formaldehyde and glutathione to S-hydroxymethylglutathione. In Xanthomonas axonopodis pv. citri (strain 306), this protein is Glutathione-dependent formaldehyde-activating enzyme.